Consider the following 229-residue polypeptide: Potassium/proton antiporter CemA (229 aa).

A run of 4 helical transmembrane segments spans residues 7-27 (FTPLLYLASIVFLPWWISLSF), 114-134 (LICFVILSGYSILGNEELLIL), 154-174 (ILLLTDLCIGFHSPHGWELMI), and 189-209 (IISGLVSTFPVILDTIFKYWI).

This sequence belongs to the CemA family.

The protein localises to the plastid. It is found in the chloroplast inner membrane. It catalyses the reaction K(+)(in) + H(+)(out) = K(+)(out) + H(+)(in). In terms of biological role, contributes to K(+)/H(+) antiport activity by supporting proton efflux to control proton extrusion and homeostasis in chloroplasts in a light-dependent manner to modulate photosynthesis. Prevents excessive induction of non-photochemical quenching (NPQ) under continuous-light conditions. Indirectly promotes efficient inorganic carbon uptake into chloroplasts. In Gossypium barbadense (Sea Island cotton), this protein is Potassium/proton antiporter CemA.